We begin with the raw amino-acid sequence, 338 residues long: Ketol-acid reductoisomerase (NADP(+)) (338 aa).

The KARI N-terminal Rossmann domain maps to 1–181 (MNIYYDKDCD…GGGRAGIIET (181 aa)). NADP(+)-binding positions include 24-27 (YGSQ), Arg47, Ser50, Ser52, and 82-85 (DEHQ). Residue His107 is part of the active site. NADP(+) is bound at residue Gly133. The KARI C-terminal knotted domain occupies 182-327 (AFREETETDL…ERLRSMMPWI (146 aa)). Mg(2+) contacts are provided by Asp190, Glu194, Glu226, and Glu230. Ser251 contributes to the substrate binding site.

The protein belongs to the ketol-acid reductoisomerase family. Mg(2+) serves as cofactor.

It carries out the reaction (2R)-2,3-dihydroxy-3-methylbutanoate + NADP(+) = (2S)-2-acetolactate + NADPH + H(+). The enzyme catalyses (2R,3R)-2,3-dihydroxy-3-methylpentanoate + NADP(+) = (S)-2-ethyl-2-hydroxy-3-oxobutanoate + NADPH + H(+). Its pathway is amino-acid biosynthesis; L-isoleucine biosynthesis; L-isoleucine from 2-oxobutanoate: step 2/4. It functions in the pathway amino-acid biosynthesis; L-valine biosynthesis; L-valine from pyruvate: step 2/4. Functionally, involved in the biosynthesis of branched-chain amino acids (BCAA). Catalyzes an alkyl-migration followed by a ketol-acid reduction of (S)-2-acetolactate (S2AL) to yield (R)-2,3-dihydroxy-isovalerate. In the isomerase reaction, S2AL is rearranged via a Mg-dependent methyl migration to produce 3-hydroxy-3-methyl-2-ketobutyrate (HMKB). In the reductase reaction, this 2-ketoacid undergoes a metal-dependent reduction by NADPH to yield (R)-2,3-dihydroxy-isovalerate. This chain is Ketol-acid reductoisomerase (NADP(+)), found in Nitrosococcus oceani (strain ATCC 19707 / BCRC 17464 / JCM 30415 / NCIMB 11848 / C-107).